Consider the following 239-residue polypeptide: Serine protease SplD (239 aa).

The signal sequence occupies residues 1-36; sequence MNKNIIIKSIAALTILTSITGVGTTVVDGIQQTAKA. Active-site charge relay system residues include H75, D114, and S192.

It belongs to the peptidase S1B family.

It localises to the secreted. The sequence is that of Serine protease SplD (splD) from Staphylococcus aureus (strain COL).